A 453-amino-acid polypeptide reads, in one-letter code: tRNA-2-methylthio-N(6)-dimethylallyladenosine synthase (453 aa).

Residues 11–131 (KSFHVKSFGC…LPQLVADAAE (121 aa)) form the MTTase N-terminal domain. The [4Fe-4S] cluster site is built by C20, C56, C94, C167, C171, and C174. The Radical SAM core domain occupies 153-385 (RRQGPTAFLT…QALLNEQQHR (233 aa)). Residues 388-449 (LATVGKRCEV…PNSLSGALVE (62 aa)) form the TRAM domain.

It belongs to the methylthiotransferase family. MiaB subfamily. In terms of assembly, monomer. Requires [4Fe-4S] cluster as cofactor.

Its subcellular location is the cytoplasm. The catalysed reaction is N(6)-dimethylallyladenosine(37) in tRNA + (sulfur carrier)-SH + AH2 + 2 S-adenosyl-L-methionine = 2-methylsulfanyl-N(6)-dimethylallyladenosine(37) in tRNA + (sulfur carrier)-H + 5'-deoxyadenosine + L-methionine + A + S-adenosyl-L-homocysteine + 2 H(+). Its function is as follows. Catalyzes the methylthiolation of N6-(dimethylallyl)adenosine (i(6)A), leading to the formation of 2-methylthio-N6-(dimethylallyl)adenosine (ms(2)i(6)A) at position 37 in tRNAs that read codons beginning with uridine. The sequence is that of tRNA-2-methylthio-N(6)-dimethylallyladenosine synthase from Rhizorhabdus wittichii (strain DSM 6014 / CCUG 31198 / JCM 15750 / NBRC 105917 / EY 4224 / RW1) (Sphingomonas wittichii).